A 363-amino-acid polypeptide reads, in one-letter code: Histidinol-phosphate aminotransferase (363 aa).

Lysine 215 is subject to N6-(pyridoxal phosphate)lysine.

The protein belongs to the class-II pyridoxal-phosphate-dependent aminotransferase family. Histidinol-phosphate aminotransferase subfamily. In terms of assembly, homodimer. Pyridoxal 5'-phosphate is required as a cofactor.

It catalyses the reaction L-histidinol phosphate + 2-oxoglutarate = 3-(imidazol-4-yl)-2-oxopropyl phosphate + L-glutamate. Its pathway is amino-acid biosynthesis; L-histidine biosynthesis; L-histidine from 5-phospho-alpha-D-ribose 1-diphosphate: step 7/9. The chain is Histidinol-phosphate aminotransferase from Buchnera aphidicola subsp. Diuraphis noxia.